The chain runs to 509 residues: Cytochrome P450 4A10 (509 aa).

Helical transmembrane passes span 11–31 and 121–141; these read FTGS…LLLL and LLAP…WFQH. Glu320 contacts heme. Ser439 is modified (phosphoserine). Position 456 (Cys456) interacts with heme.

Belongs to the cytochrome P450 family. Heme serves as cofactor. In terms of tissue distribution, expressed in liver (at protein level) and kidney (at protein level).

The protein resides in the endoplasmic reticulum membrane. The protein localises to the microsome membrane. The catalysed reaction is an omega-methyl-long-chain fatty acid + reduced [NADPH--hemoprotein reductase] + O2 = an omega-hydroxy-long-chain fatty acid + oxidized [NADPH--hemoprotein reductase] + H2O + H(+). It catalyses the reaction dodecanoate + reduced [NADPH--hemoprotein reductase] + O2 = 12-hydroxydodecanoate + oxidized [NADPH--hemoprotein reductase] + H2O + H(+). It carries out the reaction dodecanoate + reduced [NADPH--hemoprotein reductase] + O2 = 11-hydroxydodecanoate + oxidized [NADPH--hemoprotein reductase] + H2O + H(+). The enzyme catalyses tetradecanoate + reduced [NADPH--hemoprotein reductase] + O2 = 14-hydroxytetradecanoate + oxidized [NADPH--hemoprotein reductase] + H2O + H(+). The catalysed reaction is hexadecanoate + reduced [NADPH--hemoprotein reductase] + O2 = 16-hydroxyhexadecanoate + oxidized [NADPH--hemoprotein reductase] + H2O + H(+). It catalyses the reaction (9Z)-octadecenoate + reduced [NADPH--hemoprotein reductase] + O2 = 18-hydroxy-(9Z)-octadecenoate + oxidized [NADPH--hemoprotein reductase] + H2O + H(+). It carries out the reaction (9Z,12Z)-octadecadienoate + reduced [NADPH--hemoprotein reductase] + O2 = 18-hydroxy-(9Z,12Z)-octadecadienoate + oxidized [NADPH--hemoprotein reductase] + H2O + H(+). The enzyme catalyses (9Z,12Z)-octadecadienoate + reduced [NADPH--hemoprotein reductase] + O2 = 17-hydroxy-(9Z,12Z)-octadecadienoate + oxidized [NADPH--hemoprotein reductase] + H2O + H(+). The catalysed reaction is (5Z,8Z,11Z,14Z)-eicosatetraenoate + reduced [NADPH--hemoprotein reductase] + O2 = 20-hydroxy-(5Z,8Z,11Z,14Z)-eicosatetraenoate + oxidized [NADPH--hemoprotein reductase] + H2O + H(+). It catalyses the reaction 8,9-epoxy-(5Z,11Z,14Z)-eicosatrienoate + reduced [NADPH--hemoprotein reductase] + O2 = 20-hydroxy-8,9-epoxy-(5Z,11Z,14Z)-eicosatrienoate + oxidized [NADPH--hemoprotein reductase] + H2O + H(+). A cytochrome P450 monooxygenase involved in the metabolism of fatty acids. Catalyzes predominantly the oxidation of the terminal carbon (omega-oxidation) of long-chain fatty acids. Acts as a major omega-hydroxylase for dodecanoic (lauric) acid in liver. In kidney, may play an important role in omega-hydroxylation of (5Z,8Z,11Z,14Z)-eicosatetraenoic acid (arachidonate) to 20-hydroxyeicosatetraenoic acid (20-HETE), a signaling molecule acting both as vasoconstrictive and natriuretic with overall effect on arterial blood pressure. Also participates in the formation of anti-inflammatory hydroxyepoxyeicosatrienoic acids (HEETs) in kidney by converting 8,9-epoxyeicosatrienoic acid (EET) to 20,8,9-HEET, an activator of PPARA. Displays substantially lower fatty acid omega-1 hydroxylase activity. Mechanistically, uses molecular oxygen inserting one oxygen atom into a substrate, and reducing the second into a water molecule, with two electrons provided by NADPH via cytochrome P450 reductase (CPR; NADPH-ferrihemoprotein reductase). The chain is Cytochrome P450 4A10 (Cyp4a10) from Rattus norvegicus (Rat).